We begin with the raw amino-acid sequence, 390 residues long: Succinyl-diaminopimelate desuccinylase (390 aa).

Histidine 75 contacts Zn(2+). Residue aspartate 77 is part of the active site. Residue aspartate 108 participates in Zn(2+) binding. Glutamate 141 acts as the Proton acceptor in catalysis. Residues glutamate 142, glutamate 170, and histidine 359 each coordinate Zn(2+).

Belongs to the peptidase M20A family. DapE subfamily. In terms of assembly, homodimer. It depends on Zn(2+) as a cofactor. Co(2+) is required as a cofactor.

The catalysed reaction is N-succinyl-(2S,6S)-2,6-diaminopimelate + H2O = (2S,6S)-2,6-diaminopimelate + succinate. It functions in the pathway amino-acid biosynthesis; L-lysine biosynthesis via DAP pathway; LL-2,6-diaminopimelate from (S)-tetrahydrodipicolinate (succinylase route): step 3/3. Functionally, catalyzes the hydrolysis of N-succinyl-L,L-diaminopimelic acid (SDAP), forming succinate and LL-2,6-diaminopimelate (DAP), an intermediate involved in the bacterial biosynthesis of lysine and meso-diaminopimelic acid, an essential component of bacterial cell walls. This chain is Succinyl-diaminopimelate desuccinylase, found in Maricaulis maris (strain MCS10) (Caulobacter maris).